We begin with the raw amino-acid sequence, 489 residues long: MDFFPVFMRLKDRACLVVGGGPVALRKVSLLRKAHARVTVVSPALCPELAALKARDAIEHLPRGFEDADVDARVLVIAATDDEDLNRHVSELCTERCIPVNVVDQPELCGFITPSMIDRSPIQVAVSTGGSSPVLARLLRSRIESFIPAAYGRLAALVEGYRLKVKARIPDTELRRRFWERLLEGPVTELFMSGREDAARETLEKALETGLDTRDAGGEVFLVGAGPGDPDLLTFRALRLMQLADVVVYDNLVSPAIIELVRRDAEMIYAGKKRNLHTLPQEEINQLLVRLAKEGKRVLRLKGGDPFIFGRGGEEIDTLMQEGIPFQVVPGITAAAGCASFSGIPLTHRDYAQAVVFATGHLRDGSIDLNWKMLAQPRQTVVFYMGLLGLPIICRELMAHGVSPDMPMALVEQGTTQNQRVIVGTLASMPDLVKDYDVQPPTLIIVGEVVKLHERLKWFQPGTDHTVKSLFSSQGQVVEARSSTEGAEA.

The precorrin-2 dehydrogenase /sirohydrochlorin ferrochelatase stretch occupies residues Met-1 to Leu-203. NAD(+)-binding positions include Pro-22 to Val-23 and Pro-43 to Ala-44. Residues Gly-218–Ala-489 form a uroporphyrinogen-III C-methyltransferase region. Pro-227 is a binding site for S-adenosyl-L-methionine. Residue Asp-250 is the Proton acceptor of the active site. Catalysis depends on Lys-272, which acts as the Proton donor. Residues Gly-303–Asp-305, Ile-308, Thr-333–Ala-334, Met-385, and Gly-414 each bind S-adenosyl-L-methionine.

In the N-terminal section; belongs to the precorrin-2 dehydrogenase / sirohydrochlorin ferrochelatase family. The protein in the C-terminal section; belongs to the precorrin methyltransferase family.

It carries out the reaction uroporphyrinogen III + 2 S-adenosyl-L-methionine = precorrin-2 + 2 S-adenosyl-L-homocysteine + H(+). The enzyme catalyses precorrin-2 + NAD(+) = sirohydrochlorin + NADH + 2 H(+). It catalyses the reaction siroheme + 2 H(+) = sirohydrochlorin + Fe(2+). It participates in cofactor biosynthesis; adenosylcobalamin biosynthesis; precorrin-2 from uroporphyrinogen III: step 1/1. It functions in the pathway cofactor biosynthesis; adenosylcobalamin biosynthesis; sirohydrochlorin from precorrin-2: step 1/1. The protein operates within porphyrin-containing compound metabolism; siroheme biosynthesis; precorrin-2 from uroporphyrinogen III: step 1/1. Its pathway is porphyrin-containing compound metabolism; siroheme biosynthesis; siroheme from sirohydrochlorin: step 1/1. It participates in porphyrin-containing compound metabolism; siroheme biosynthesis; sirohydrochlorin from precorrin-2: step 1/1. Functionally, multifunctional enzyme that catalyzes the SAM-dependent methylations of uroporphyrinogen III at position C-2 and C-7 to form precorrin-2 via precorrin-1. Then it catalyzes the NAD-dependent ring dehydrogenation of precorrin-2 to yield sirohydrochlorin. Finally, it catalyzes the ferrochelation of sirohydrochlorin to yield siroheme. The chain is Siroheme synthase from Thioalkalivibrio sulfidiphilus (strain HL-EbGR7).